A 450-amino-acid polypeptide reads, in one-letter code: Glucose-6-phosphate isomerase (450 aa).

T39 carries the phosphothreonine modification. Catalysis depends on E291, which acts as the Proton donor. Catalysis depends on residues H312 and K426.

The protein belongs to the GPI family.

The protein resides in the cytoplasm. It carries out the reaction alpha-D-glucose 6-phosphate = beta-D-fructose 6-phosphate. Its pathway is carbohydrate biosynthesis; gluconeogenesis. It participates in carbohydrate degradation; glycolysis; D-glyceraldehyde 3-phosphate and glycerone phosphate from D-glucose: step 2/4. Functionally, catalyzes the reversible isomerization of glucose-6-phosphate to fructose-6-phosphate. This is Glucose-6-phosphate isomerase from Halalkalibacterium halodurans (strain ATCC BAA-125 / DSM 18197 / FERM 7344 / JCM 9153 / C-125) (Bacillus halodurans).